We begin with the raw amino-acid sequence, 80 residues long: Small ribosomal subunit protein bS16 (80 aa).

The protein belongs to the bacterial ribosomal protein bS16 family.

In Wigglesworthia glossinidia brevipalpis, this protein is Small ribosomal subunit protein bS16.